The primary structure comprises 201 residues: Dephospho-CoA kinase (201 aa).

In terms of domain architecture, DPCK spans 4 to 201 (SVGLTGNIAS…KYLREAKIKQ (198 aa)). 12–17 (ASGKST) contacts ATP.

Belongs to the CoaE family.

It is found in the cytoplasm. The enzyme catalyses 3'-dephospho-CoA + ATP = ADP + CoA + H(+). Its pathway is cofactor biosynthesis; coenzyme A biosynthesis; CoA from (R)-pantothenate: step 5/5. Functionally, catalyzes the phosphorylation of the 3'-hydroxyl group of dephosphocoenzyme A to form coenzyme A. The polypeptide is Dephospho-CoA kinase (Legionella pneumophila (strain Paris)).